The sequence spans 245 residues: Octanoyltransferase (245 aa).

A BPL/LPL catalytic domain is found at Q54–I242. Residues R93–H100, A173–G175, and G186–S188 contribute to the substrate site. The Acyl-thioester intermediate role is filled by C204.

This sequence belongs to the LipB family.

The protein localises to the cytoplasm. It carries out the reaction octanoyl-[ACP] + L-lysyl-[protein] = N(6)-octanoyl-L-lysyl-[protein] + holo-[ACP] + H(+). The protein operates within protein modification; protein lipoylation via endogenous pathway; protein N(6)-(lipoyl)lysine from octanoyl-[acyl-carrier-protein]: step 1/2. Functionally, catalyzes the transfer of endogenously produced octanoic acid from octanoyl-acyl-carrier-protein onto the lipoyl domains of lipoate-dependent enzymes. Lipoyl-ACP can also act as a substrate although octanoyl-ACP is likely to be the physiological substrate. This Bartonella henselae (strain ATCC 49882 / DSM 28221 / CCUG 30454 / Houston 1) (Rochalimaea henselae) protein is Octanoyltransferase.